Reading from the N-terminus, the 180-residue chain is Bifunctional protein PyrR 1 (180 aa).

Residues 39-40, 103-111, R136, and V160 contribute to the substrate site; these read TR and DDVLFTGRT. Positions 99–111 match the PRPP-binding motif; the sequence is VILVDDVLFTGRT.

Belongs to the purine/pyrimidine phosphoribosyltransferase family. PyrR subfamily. In terms of assembly, homodimer and homohexamer; in equilibrium.

The catalysed reaction is UMP + diphosphate = 5-phospho-alpha-D-ribose 1-diphosphate + uracil. Its function is as follows. Regulates transcriptional attenuation of the pyrimidine nucleotide (pyr) operon by binding in a uridine-dependent manner to specific sites on pyr mRNA. This disrupts an antiterminator hairpin in the RNA and favors formation of a downstream transcription terminator, leading to a reduced expression of downstream genes. In terms of biological role, also displays a weak uracil phosphoribosyltransferase activity which is not physiologically significant. The protein is Bifunctional protein PyrR 1 (pyrR1) of Lactiplantibacillus plantarum (strain ATCC BAA-793 / NCIMB 8826 / WCFS1) (Lactobacillus plantarum).